The sequence spans 144 residues: Large ribosomal subunit protein uL15 (144 aa).

The interval 1 to 48 (MIKLESLQDPSPRKRRTKLLGRGPSSGHGKTSCRGHKGDGSRSGYKRR) is disordered.

The protein belongs to the universal ribosomal protein uL15 family. As to quaternary structure, part of the 50S ribosomal subunit.

Functionally, binds to the 23S rRNA. This Chlamydia abortus (strain DSM 27085 / S26/3) (Chlamydophila abortus) protein is Large ribosomal subunit protein uL15.